Reading from the N-terminus, the 218-residue chain is Adenylate kinase (218 aa).

Gly10 to Thr15 provides a ligand contact to ATP. Positions Ser30 to Val59 are NMP. AMP is bound by residues Thr31, Arg36, Gly57–Val59, Gly85–Arg88, and Gln92. The LID stretch occupies residues Gly122–Asp159. Residues Arg123 and Thr132–Tyr133 each bind ATP. Residues Arg156 and Arg167 each coordinate AMP. An ATP-binding site is contributed by Gly203.

The protein belongs to the adenylate kinase family. As to quaternary structure, monomer.

The protein localises to the cytoplasm. The catalysed reaction is AMP + ATP = 2 ADP. It functions in the pathway purine metabolism; AMP biosynthesis via salvage pathway; AMP from ADP: step 1/1. Its function is as follows. Catalyzes the reversible transfer of the terminal phosphate group between ATP and AMP. Plays an important role in cellular energy homeostasis and in adenine nucleotide metabolism. This is Adenylate kinase from Variovorax paradoxus (strain S110).